Reading from the N-terminus, the 414-residue chain is Transforming growth factor beta-2 proprotein (414 aa).

Residues 1–20 (MHYCVLSTFLLLHLVPVALS) form the signal peptide. N-linked (GlcNAc...) asparagine glycans are attached at residues N72, N140, and N241. Cystine bridges form between C309/C318, C317/C380, C346/C411, and C350/C413.

It belongs to the TGF-beta family. Interacts with the serine proteases, HTRA1 and HTRA3. Interacts with ASPN. Interacts with MFAP5. In terms of assembly, interacts with Transforming growth factor beta-2 (TGF-beta-2) chain; interaction is non-covalent and maintains (TGF-beta-2) in a latent state. Interacts with LRRC32/GARP; leading to regulate activation of TGF-beta-2. Interacts with NREP; the interaction results in a decrease in TGFB2 autoinduction. As to quaternary structure, transforming growth factor beta-2: Homodimer; disulfide-linked. Transforming growth factor beta-2: Interacts with TGF-beta receptors (TGFBR1 and TGFBR2), leading to signal transduction. Post-translationally, the precursor proprotein is cleaved in the Golgi apparatus to form Transforming growth factor beta-2 (TGF-beta-2) and Latency-associated peptide (LAP) chains, which remain non-covalently linked, rendering TGF-beta-2 inactive.

The protein resides in the secreted. It localises to the extracellular space. It is found in the extracellular matrix. In terms of biological role, precursor of the Latency-associated peptide (LAP) and Transforming growth factor beta-2 (TGF-beta-2) chains, which constitute the regulatory and active subunit of TGF-beta-2, respectively. Functionally, required to maintain the Transforming growth factor beta-2 (TGF-beta-2) chain in a latent state during storage in extracellular matrix. Associates non-covalently with TGF-beta-2 and regulates its activation via interaction with 'milieu molecules', such as LTBP1 and LRRC32/GARP, that control activation of TGF-beta-2. Its function is as follows. Multifunctional protein that regulates various processes such as angiogenesis and heart development. Activation into mature form follows different steps: following cleavage of the proprotein in the Golgi apparatus, Latency-associated peptide (LAP) and Transforming growth factor beta-2 (TGF-beta-2) chains remain non-covalently linked rendering TGF-beta-2 inactive during storage in extracellular matrix. At the same time, LAP chain interacts with 'milieu molecules', such as LTBP1 and LRRC32/GARP, that control activation of TGF-beta-2 and maintain it in a latent state during storage in extracellular milieus. Once activated following release of LAP, TGF-beta-2 acts by binding to TGF-beta receptors (TGFBR1 and TGFBR2), which transduce signal. In Mus musculus (Mouse), this protein is Transforming growth factor beta-2 proprotein (Tgfb2).